We begin with the raw amino-acid sequence, 803 residues long: H(+)/Cl(-) exchange transporter 7 (803 aa).

Residues 1 to 46 are disordered; it reads MANVSKKVSWSGRDRDDEEGAPLLRRTGQPDEETPLLNGAGPGARQ. The Cytoplasmic segment spans residues 1–124; that stretch reads MANVSKKVSW…TAFRTVEIKR (124 aa). A Phosphoserine modification is found at Ser-9. The next 2 helical transmembrane spans lie at 125-157 and 172-195; these read WVIC…YRVI and FSLL…VAFI. A Selectivity filter part_1 motif is present at residues 201-205; it reads GSGIP. Ser-202 provides a ligand contact to chloride. The helical intramembrane region spans 204-211; the sequence is IPQIKCFL. The next 2 helical transmembrane spans lie at 221–239 and 245–262; these read RLKT…VVGG and EGPM…ISQG. The Selectivity filter part_2 motif lies at 243-247; the sequence is GKEGP. 2 intramembrane regions (helical) span residues 286-298 and 302-310; these read FVSA…VSAA and PVGGVLFSL. A run of 5 helical transmembrane segments spans residues 320 to 339, 373 to 403, 408 to 430, 485 to 505, and 510 to 533; these read FLTW…LNFV, IPVF…FRIR, PCLQ…FVLI, PMTL…TYGL, and GVFI…LSYL. Residues 510–514 carry the Selectivity filter part_3 motif; sequence GVFIP. Phe-512 serves as a coordination point for chloride. The helical intramembrane region spans 543–557; that stretch reads GKYALMGAAAQLGGI. Residues 558–560 constitute an intramembrane region (note=Loop between two helices); the sequence is VRM. Residues 561–572 constitute an intramembrane region (helical); sequence TLSLTVIMMEAT. The segment at residues 573 to 576 is an intramembrane region (note=Loop between two helices); the sequence is SNVT. A helical transmembrane segment spans residues 577-595; sequence YGFPIMLVLMTAKIVGDVF. The Cytoplasmic segment spans residues 596 to 803; sequence IEGLYDMHIQ…GLEELSLAQT (208 aa). Tyr-600 provides a ligand contact to chloride. 2 CBS domains span residues 629-693 and 739-797; these read MSTP…VFVE and MNPS…GLEE. ATP is bound by residues 656-658 and 781-784; these read HNG and TRKD. Ser-799 carries the post-translational modification Phosphoserine.

Belongs to the chloride channel (TC 2.A.49) family. ClC-7/CLCN7 subfamily. Chloride channel 7 are heteromers of alpha (CLCN7) and beta (OSTM1) subunits. In terms of tissue distribution, liver, spleen, kidneys and brain.

The protein resides in the lysosome membrane. The catalysed reaction is 2 chloride(in) + H(+)(out) = 2 chloride(out) + H(+)(in). Slowly voltage-gated channel mediating the exchange of chloride ions against protons. Functions as antiporter and contributes to the acidification of the lysosome lumen and may be involved in maintaining lysosomal pH. The CLC channel family contains both chloride channels and proton-coupled anion transporters that exchange chloride or another anion for protons. The presence of conserved gating glutamate residues is typical for family members that function as antiporters. The protein is H(+)/Cl(-) exchange transporter 7 of Mus musculus (Mouse).